The primary structure comprises 160 residues: MSAPRKTRLYAILAVICGAVLTVALTLYALSSNIDLFYTPSEILYGKNETQEKPAIGQRLRVGGMVMPGSVRRDSQSLEVRFTVYDAQGSVEVTYNGMLPDLFREGQGVVAQGILDTDDHIMAKEVLARHDENYTPPEIKAAMEGQHGHAPAAVTEGKRL.

The Cytoplasmic segment spans residues 1 to 8; the sequence is MSAPRKTR. The helical; Signal-anchor for type II membrane protein transmembrane segment at 9–29 threads the bilayer; it reads LYAILAVICGAVLTVALTLYA. The Periplasmic portion of the chain corresponds to 30–160; it reads LSSNIDLFYT…PAAVTEGKRL (131 aa). Heme is bound by residues histidine 130 and tyrosine 134.

Belongs to the CcmE/CycJ family.

The protein resides in the cell inner membrane. Its function is as follows. Heme chaperone required for the biogenesis of c-type cytochromes. Transiently binds heme delivered by CcmC and transfers the heme to apo-cytochromes in a process facilitated by CcmF and CcmH. The polypeptide is Cytochrome c-type biogenesis protein CcmE (Pectobacterium carotovorum subsp. carotovorum (strain PC1)).